Here is a 790-residue protein sequence, read N- to C-terminus: Pleckstrin homology domain-containing family G member 6 (790 aa).

Residues 63 to 91 form a disordered region; it reads SGQARGLSPMRLRDPEPEKRHGGHVGAGL. Positions 73-82 are enriched in basic and acidic residues; sequence RLRDPEPEKR. The DH domain occupies 161 to 353; it reads HQQEALWELL…ESFLRHINGQ (193 aa). The region spanning 409 to 509 is the PH domain; it reads QLLLEGPVRV…WLEKTQQAQA (101 aa). Composition is skewed to basic and acidic residues over residues 529–538 and 625–635; these read LYRDQDRESP and ELRDIPLRPHP. 3 disordered regions span residues 529–677, 690–730, and 748–790; these read LYRD…ASER, LRGQ…HTSL, and SQRI…ASEV. Basic and acidic residues predominate over residues 748-762; that stretch reads SQRIEGAEEPRDSRP.

As to quaternary structure, interacts with MYH10. Interacts with ELMO1 and EZR (in an open conformation). Interacts with CSPP1. Highest expression in the placenta. Low levels in small intestine, lung, liver, kidney, thymus and heart.

It localises to the cell projection. The protein localises to the microvillus. The protein resides in the cytoplasm. It is found in the cytoskeleton. Its subcellular location is the spindle. It localises to the spindle pole. The protein localises to the cleavage furrow. Guanine nucleotide exchange factor activating the small GTPase RHOA, which, in turn, induces myosin filament formation. Also activates RHOG. Does not activate RAC1, or to a much lower extent than RHOA and RHOG. Part of a functional unit, involving PLEKHG6, MYH10 and RHOA, at the cleavage furrow to advance furrow ingression during cytokinesis. In epithelial cells, required for the formation of microvilli and membrane ruffles on the apical pole. Along with EZR, required for normal macropinocytosis. This is Pleckstrin homology domain-containing family G member 6 (PLEKHG6) from Homo sapiens (Human).